The primary structure comprises 380 residues: Transcription factor Sox-17-alpha-A (380 aa).

Disordered stretches follow at residues 1-20 (MSSP…KCSV) and 40-59 (GEGK…KAEA). The segment at residues 61–129 (IRRPMNAFMV…QHMQDHPNYK (69 aa)) is a DNA-binding region (HMG box). Residues 264 to 379 (VSPVQGMMAC…TAVYYCNYPS (116 aa)) enclose the Sox C-terminal domain. The segment at 292–312 (HHQLHQAGQPSPPPEAQQMGR) is disordered. The short motif at 328–336 (TEFEQYLSY) is the 9aaTAD element. Residues 329-334 (EFEQYL) are required for transcriptional activity and interaction with ctnnb1.

As to quaternary structure, interacts (via C-terminus) with ctnnb1/beta-catenin (via Armadillo repeats); this interaction is required for inhibition of wnt-signaling. In terms of tissue distribution, in early gastrulae, expressed in the vegetal but not animal hemisphere. The vegetal region is fated to become endoderm, and endodermal expression continues throughout gastrulation and neurulation. At tailbud stages, expression is down-regulated and becomes restricted to the most posterior endoderm and the future liver/gall bladder region. By 3-7 days, endodermal expression is restricted to the gall bladder bud. Also expressed in the embryonic gut, with strong expression in the posterior gut during tailbud stages, but by stage 40, expression rises again in the anterior gut. Expressed at a low level in the adult kidney and spleen.

It localises to the nucleus. Functionally, transcriptional activator. Binds to the DNA sequence 5'-AACAAT-3'. All of the sox17 proteins are required for embryonic endoderm development and gastrulation movements, and show some redundancy in function. In addition, the sox17 proteins have distinct but overlapping roles in later gut development. Acts downstream of vegt-signaling in endoderm differentiation to induce a range of endodermal genes both directly (including endodermin and dhh/chh) and indirectly. Also represses wnt-responsive genes to inhibit wnt/beta-catenin signaling. The polypeptide is Transcription factor Sox-17-alpha-A (sox17a-a) (Xenopus laevis (African clawed frog)).